The primary structure comprises 402 residues: Serine/threonine-protein phosphatase 4 regulatory subunit 2 (402 aa).

The segment covering Met-206 to Asp-248 has biased composition (acidic residues). Disordered regions lie at residues Met-206–Asp-270, Ser-291–Arg-311, and Gly-331–Met-402. The span at Ser-348–Ser-358 shows a compositional bias: low complexity. Over residues Ile-371–Leu-396 the composition is skewed to polar residues.

Belongs to the PPP4R2 family. Regulatory subunit (R2) of the histone H2A phosphatase complex (HTP-C) consisting of PPH3, PSY2 and PSY4.

It is found in the nucleus. Its function is as follows. Regulatory subunit of the histone H2A phosphatase complex, which dephosphorylates H2AS128ph (gamma-H2A) that has been displaced from sites of DNA lesions in the double-stranded DNA break repair process. Dephosphorylation is necessary for efficient recovery from the DNA damage checkpoint. The sequence is that of Serine/threonine-protein phosphatase 4 regulatory subunit 2 (PSY4) from Kluyveromyces lactis (strain ATCC 8585 / CBS 2359 / DSM 70799 / NBRC 1267 / NRRL Y-1140 / WM37) (Yeast).